The sequence spans 1171 residues: ATP-dependent helicase/deoxyribonuclease subunit B (1171 aa).

The protein belongs to the helicase family. AddB/RexB type 2 subfamily. As to quaternary structure, heterodimer of AddA and RexB. Mg(2+) serves as cofactor.

Its function is as follows. The heterodimer acts as both an ATP-dependent DNA helicase and an ATP-dependent, dual-direction single-stranded exonuclease. Recognizes the chi site generating a DNA molecule suitable for the initiation of homologous recombination. This subunit has 5' -&gt; 3' nuclease activity but not helicase activity. In Leuconostoc citreum (strain KM20), this protein is ATP-dependent helicase/deoxyribonuclease subunit B.